We begin with the raw amino-acid sequence, 279 residues long: Shikimate dehydrogenase (NADP(+)) (279 aa).

Residues 14–16 (SIS) and Thr63 contribute to the shikimate site. Lys67 serves as the catalytic Proton acceptor. Residue Glu79 participates in NADP(+) binding. Shikimate is bound by residues Asn88 and Asp103. Residues 127–131 (GAGGA), 151–156 (NRTYEK), and Met219 contribute to the NADP(+) site. Residue Tyr221 participates in shikimate binding. Gly242 is a binding site for NADP(+).

Belongs to the shikimate dehydrogenase family. As to quaternary structure, homodimer.

It catalyses the reaction shikimate + NADP(+) = 3-dehydroshikimate + NADPH + H(+). It functions in the pathway metabolic intermediate biosynthesis; chorismate biosynthesis; chorismate from D-erythrose 4-phosphate and phosphoenolpyruvate: step 4/7. Involved in the biosynthesis of the chorismate, which leads to the biosynthesis of aromatic amino acids. Catalyzes the reversible NADPH linked reduction of 3-dehydroshikimate (DHSA) to yield shikimate (SA). This is Shikimate dehydrogenase (NADP(+)) from Caldicellulosiruptor saccharolyticus (strain ATCC 43494 / DSM 8903 / Tp8T 6331).